We begin with the raw amino-acid sequence, 351 residues long: Quinolinate phosphoribosyltransferase [decarboxylating] 2b, mitochondrial (351 aa).

Substrate is bound by residues R142, 173–175, R197, K207, E240, D267, 299–301, and 320–322; these read TRK, SGN, and SGA.

It belongs to the NadC/ModD family. Expressed in roots and flowers.

The protein localises to the mitochondrion. It carries out the reaction nicotinate beta-D-ribonucleotide + CO2 + diphosphate = quinolinate + 5-phospho-alpha-D-ribose 1-diphosphate + 2 H(+). The protein operates within alkaloid biosynthesis; nicotine biosynthesis. It participates in cofactor biosynthesis; NAD(+) biosynthesis; nicotinate D-ribonucleotide from quinolinate: step 1/1. Its function is as follows. Involved in the biosynthesis of pyridine alkaloid natural products, leading mainly to the production of anabasine, anatabine, nicotine and nornicotine, effective deterrents against herbivores with antiparasitic and pesticide properties (neurotoxins); nornicotine serves as the precursor in the synthesis of the carcinogen compound N'-nitrosonornicotine (NNN). Involved in the catabolism of quinolinic acid (QA). The chain is Quinolinate phosphoribosyltransferase [decarboxylating] 2b, mitochondrial from Nicotiana tabacum (Common tobacco).